The chain runs to 331 residues: Cathepsin 7 (331 aa).

An N-terminal signal peptide occupies residues 1–17 (MTVAVFLAILCLRAALA). The propeptide at 18-111 (APRPDYSLDA…GKHIQKRNVK (94 aa)) is activation peptide. Positions 33-50 (KRNNAKTYSPEEEKQRRA) match the Nuclear localization signal motif. N-linked (GlcNAc...) asparagine glycosylation is present at N72. 3 disulfide bridges follow: C133/C176, C167/C209, and C267/C320. The active site involves C136. Catalysis depends on residues H274 and N298.

This sequence belongs to the peptidase C1 family.

The protein resides in the endosome. The protein localises to the lysosome. It is found in the cytoplasm. Its subcellular location is the perinuclear region. It localises to the golgi apparatus. The protein resides in the nucleus. The protein localises to the secreted. It is found in the extracellular space. In terms of biological role, involved in trophoblast cell proliferation and differentiation probably by affecting mitotic cell cycle progression. Proteolytic activity and nuclear localization are essential for its role in cell cycle progression. The sequence is that of Cathepsin 7 (Cts7) from Rattus norvegicus (Rat).